Consider the following 295-residue polypeptide: 4-hydroxy-tetrahydrodipicolinate synthase (295 aa).

Thr-47 provides a ligand contact to pyruvate. The Proton donor/acceptor role is filled by Tyr-135. Lys-163 (schiff-base intermediate with substrate) is an active-site residue. Residue Ile-206 coordinates pyruvate.

This sequence belongs to the DapA family. In terms of assembly, homodimer.

Its subcellular location is the cytoplasm. The catalysed reaction is L-aspartate 4-semialdehyde + pyruvate = (2S,4S)-4-hydroxy-2,3,4,5-tetrahydrodipicolinate + H2O + H(+). Its pathway is amino-acid biosynthesis; L-lysine biosynthesis via DAP pathway; (S)-tetrahydrodipicolinate from L-aspartate: step 3/4. Its activity is regulated as follows. Is not feedback inhibited by lysine. Catalyzes the condensation of (S)-aspartate-beta-semialdehyde [(S)-ASA] and pyruvate to 4-hydroxy-tetrahydrodipicolinate (HTPA). The protein is 4-hydroxy-tetrahydrodipicolinate synthase of Staphylococcus aureus (strain COL).